The chain runs to 547 residues: 2-succinyl-5-enolpyruvyl-6-hydroxy-3-cyclohexene-1-carboxylate synthase (547 aa).

This sequence belongs to the TPP enzyme family. MenD subfamily. Homodimer. Requires Mg(2+) as cofactor. Mn(2+) serves as cofactor. The cofactor is thiamine diphosphate.

It catalyses the reaction isochorismate + 2-oxoglutarate + H(+) = 5-enolpyruvoyl-6-hydroxy-2-succinyl-cyclohex-3-ene-1-carboxylate + CO2. It functions in the pathway quinol/quinone metabolism; 1,4-dihydroxy-2-naphthoate biosynthesis; 1,4-dihydroxy-2-naphthoate from chorismate: step 2/7. It participates in quinol/quinone metabolism; menaquinone biosynthesis. Functionally, catalyzes the thiamine diphosphate-dependent decarboxylation of 2-oxoglutarate and the subsequent addition of the resulting succinic semialdehyde-thiamine pyrophosphate anion to isochorismate to yield 2-succinyl-5-enolpyruvyl-6-hydroxy-3-cyclohexene-1-carboxylate (SEPHCHC). The sequence is that of 2-succinyl-5-enolpyruvyl-6-hydroxy-3-cyclohexene-1-carboxylate synthase from Mycobacterium sp. (strain JLS).